Here is an 810-residue protein sequence, read N- to C-terminus: Coiled-coil domain-containing protein 15 (810 aa).

Coiled-coil stretches lie at residues 65–89 (VVEE…RQVR), 160–189 (DGEN…SFKT), and 638–669 (MDIE…EQQR).

As to quaternary structure, interacts with POC5, POC1B, CETN2 and FAM161A.

It localises to the cytoplasm. It is found in the cytoskeleton. Its subcellular location is the microtubule organizing center. The protein localises to the centrosome. The protein resides in the centriole. It localises to the centriolar satellite. Its function is as follows. Plays an important role in primary cilium assembly, maintenance, and length regulation. Interacts with centriole inner scaffold proteins to promote proper centriole size and integrity and assembly of functional cilia. Required for the recruitment of both the inner scaffold protein POC1B and the distal SFI1/CETN2 complex to centrioles. The polypeptide is Coiled-coil domain-containing protein 15 (Ccdc15) (Mus musculus (Mouse)).